A 334-amino-acid chain; its full sequence is Myo-inositol 2-dehydrogenase (334 aa).

The protein belongs to the Gfo/Idh/MocA family.

The enzyme catalyses myo-inositol + NAD(+) = scyllo-inosose + NADH + H(+). The protein operates within polyol metabolism; myo-inositol metabolism. Its function is as follows. Catalyzes the NAD(+)-dependent oxidation of myo-inositol (MI) to 2-keto-myo-inositol (scyllo-inosose), and thus probably functions in a myo-inositol degradation pathway together with IolM, IolN and IolO. Has no activity with scyllo-inositol and much reduced activity (78-fold lower catalytic efficiency) with 1D-chiro-inositol. This chain is Myo-inositol 2-dehydrogenase, found in Thermotoga maritima (strain ATCC 43589 / DSM 3109 / JCM 10099 / NBRC 100826 / MSB8).